The following is a 720-amino-acid chain: DNA replication licensing factor mcm7 (720 aa).

The C4-type zinc finger occupies 183-210 (CDQCGAETYQPIQSPTFMPLIMCPSREC). Positions 331–537 (FYEKLAASIA…NDLRLAQHIT (207 aa)) constitute an MCM domain. ATP is bound by residues Y344, G383, A385, K386, S387, N488, R513, and R603. The Arginine finger signature appears at 512–515 (SRFD).

The protein belongs to the MCM family. Component of the mcm2-7 complex (RLF-M). The complex forms a toroidal hexameric ring with the proposed subunit order mcm2-mcm6-mcm4-mcm7-mcm3-mcm5. The heterodimer of mmcm3/mcm5 interacts with mcm4, mmcm6, mcm7 and weakly with mcm2. The N-terminus is required for interaction with mmcm3, though this interaction may not be direct, and remains in a complex with mmcm3 throughout the cell cycle. Begins to associate with zmcm6 at the neurula stage. Component of the replisome complex. Component of the CMG helicase complex, composed of the mcm2-7 complex, the GINS complex and cdc45. Ubiquitinated by traip when forks converge following formation of DNA interstrand cross-links. Short ubiquitin chains on mcm7 promote recruitment of DNA glycosylase neil3. If the interstrand cross-link cannot be cleaved by neil3, the ubiquitin chains continue to grow on mcm7, promoting the unloading of the CMG helicase complex by the vcp/p97 ATPase.

It localises to the nucleus. Its subcellular location is the chromosome. It catalyses the reaction ATP + H2O = ADP + phosphate + H(+). Its function is as follows. Acts as a component of the mcm2-7 complex (mcm complex) which is the putative replicative helicase essential for 'once per cell cycle' DNA replication initiation and elongation in eukaryotic cells. The active ATPase sites in the mcm2-7 ring are formed through the interaction surfaces of two neighboring subunits such that a critical structure of a conserved arginine finger motif is provided in trans relative to the ATP-binding site of the Walker A box of the adjacent subunit. The six ATPase active sites, however, are likely to contribute differentially to the complex helicase activity. The existence of maternal and zygotic forms of mcm3 and mcm6 suggests that specific forms of mcm2-7 complexes may be used during different stages of development. The chain is DNA replication licensing factor mcm7 from Xenopus tropicalis (Western clawed frog).